A 58-amino-acid chain; its full sequence is Glutathione reductase (58 aa).

FAD-binding residues include glutamate 5, threonine 12, cysteine 13, and lysine 21. A disulfide bridge connects residues cysteine 13 and cysteine 18.

Belongs to the class-I pyridine nucleotide-disulfide oxidoreductase family. In terms of assembly, homodimer. Requires FAD as cofactor.

The protein localises to the cytoplasm. It catalyses the reaction 2 glutathione + NADP(+) = glutathione disulfide + NADPH + H(+). In terms of biological role, catalyzes the reduction of glutathione disulfide (GSSG) to reduced glutathione (GSH). Constitutes the major mechanism to maintain a high GSH:GSSG ratio in the cytosol. The protein is Glutathione reductase of Spirulina sp.